Reading from the N-terminus, the 264-residue chain is Thymidylate synthase (264 aa).

Residue R21 participates in dUMP binding. H51 is a binding site for (6R)-5,10-methylene-5,6,7,8-tetrahydrofolate. Residue R126–R127 coordinates dUMP. The Nucleophile role is filled by C146. Residues R166–D169, N177, and H207–Y209 each bind dUMP. D169 serves as a coordination point for (6R)-5,10-methylene-5,6,7,8-tetrahydrofolate. A263 is a binding site for (6R)-5,10-methylene-5,6,7,8-tetrahydrofolate.

Belongs to the thymidylate synthase family. Bacterial-type ThyA subfamily. In terms of assembly, homodimer.

The protein resides in the cytoplasm. It carries out the reaction dUMP + (6R)-5,10-methylene-5,6,7,8-tetrahydrofolate = 7,8-dihydrofolate + dTMP. It participates in pyrimidine metabolism; dTTP biosynthesis. Catalyzes the reductive methylation of 2'-deoxyuridine-5'-monophosphate (dUMP) to 2'-deoxythymidine-5'-monophosphate (dTMP) while utilizing 5,10-methylenetetrahydrofolate (mTHF) as the methyl donor and reductant in the reaction, yielding dihydrofolate (DHF) as a by-product. This enzymatic reaction provides an intracellular de novo source of dTMP, an essential precursor for DNA biosynthesis. This chain is Thymidylate synthase, found in Sinorhizobium medicae (strain WSM419) (Ensifer medicae).